Here is a 557-residue protein sequence, read N- to C-terminus: Aspartate--tRNA ligase, cytoplasmic (557 aa).

A compositionally biased stretch (basic and acidic residues) spans 1 to 12 (MSQDENIVKAVE). Positions 1 to 74 (MSQDENIVKA…AAAEDTAKDN (74 aa)) are disordered. Position 2 is an N-acetylserine (serine 2). Residue serine 14 is modified to Phosphoserine. Positions 37–74 (LQKEQEKQRKKEERALQLEAEREAREKKAAAEDTAKDN) are enriched in basic and acidic residues. Glutamate 281 is an L-aspartate binding site. Phosphoserine is present on serine 301. An aspartate region spans residues 303–306 (QFNK). Residue arginine 325 participates in L-aspartate binding. ATP is bound by residues 325 to 327 (RAE), 333 to 335 (RHM), and glutamate 478. L-aspartate contacts are provided by serine 481 and arginine 485. Serine 502 is subject to Phosphoserine. An ATP-binding site is contributed by 528 to 531 (GLER). Serine 546 is modified (phosphoserine).

This sequence belongs to the class-II aminoacyl-tRNA synthetase family. Type 2 subfamily. As to quaternary structure, homodimer.

It is found in the cytoplasm. It catalyses the reaction tRNA(Asp) + L-aspartate + ATP = L-aspartyl-tRNA(Asp) + AMP + diphosphate. In Saccharomyces cerevisiae (strain ATCC 204508 / S288c) (Baker's yeast), this protein is Aspartate--tRNA ligase, cytoplasmic (DPS1).